Here is an 880-residue protein sequence, read N- to C-terminus: Alanine--tRNA ligase (880 aa).

Positions 567, 571, 669, and 673 each coordinate Zn(2+).

This sequence belongs to the class-II aminoacyl-tRNA synthetase family. The cofactor is Zn(2+).

The protein localises to the cytoplasm. It catalyses the reaction tRNA(Ala) + L-alanine + ATP = L-alanyl-tRNA(Ala) + AMP + diphosphate. Functionally, catalyzes the attachment of alanine to tRNA(Ala) in a two-step reaction: alanine is first activated by ATP to form Ala-AMP and then transferred to the acceptor end of tRNA(Ala). Also edits incorrectly charged Ser-tRNA(Ala) and Gly-tRNA(Ala) via its editing domain. The protein is Alanine--tRNA ligase of Bacillus thuringiensis (strain Al Hakam).